Consider the following 710-residue polypeptide: Early transcription factor 82 kDa subunit (710 aa).

The protein belongs to the poxviridae VETF large subunit family. As to quaternary structure, heterodimer of a 70 kDa and a 82 kDa subunit. Part of the early transcription complex composed of ETF, RAP94/OPG109, and the DNA-directed RNA polymerase.

It localises to the virion. Functionally, acts with RNA polymerase to initiate transcription from early gene promoters. Is recruited by the RPO-associated protein of 94 kDa RAP94/OPG109 to form the early transcription complex, which also contains the core RNA polymerase. ETF heterodimer binds to early gene promoters. The polypeptide is Early transcription factor 82 kDa subunit (OPG133) (Vaccinia virus (strain Ankara) (VACV)).